We begin with the raw amino-acid sequence, 115 residues long: Glutaredoxin 4 (115 aa).

A Glutaredoxin domain is found at 5-107 (IEKIQRQIAE…QLIKETAAKY (103 aa)). Lys22 lines the glutathione pocket. [2Fe-2S] cluster is bound at residue Cys30. Glutathione is bound by residues Arg59, Phe71, and 84 to 85 (CD).

Belongs to the glutaredoxin family. Monothiol subfamily. Homodimer.

The protein resides in the cytoplasm. Functionally, monothiol glutaredoxin involved in the biogenesis of iron-sulfur clusters. The sequence is that of Glutaredoxin 4 (grxD) from Shigella flexneri.